Here is a 646-residue protein sequence, read N- to C-terminus: Long-chain fatty acid transport protein 1 (646 aa).

The Extracellular portion of the chain corresponds to 1–13; the sequence is MRTPGAGTASVAS. A helical membrane pass occupies residues 14-34; that stretch reads LGLLWLLGLPWTWSAAAAFGV. At 35 to 646 the chain is on the cytoplasmic side; sequence YVGSGGWRFL…ARICAGDFSL (612 aa). Positions 191–475 are sufficient for oligomerization; sequence EVSEQLGKSL…YVSDSATNKK (285 aa). Residue 246-257 coordinates AMP; sequence YIYTSGTTGLPK.

Belongs to the ATP-dependent AMP-binding enzyme family. In terms of assembly, self-associates. May function as a homodimer. Interacts with EPRS1; mediates the translocation of SLC27A1 from the cytoplasm to the plasma membrane thereby increasing the uptake of long-chain fatty acids. Interacts with DGAT2 and this interaction is enhanced in the presence of ZFYVE1. In terms of tissue distribution, expressed in muscle.

It is found in the cell membrane. Its subcellular location is the endomembrane system. The protein resides in the cytoplasm. The catalysed reaction is a fatty acid(in) = a fatty acid(out). It catalyses the reaction (9Z)-octadecenoate(out) = (9Z)-octadecenoate(in). The enzyme catalyses hexadecanoate(out) = hexadecanoate(in). It carries out the reaction (5Z,8Z,11Z,14Z)-eicosatetraenoate(out) = (5Z,8Z,11Z,14Z)-eicosatetraenoate(in). The catalysed reaction is (9Z,12Z)-octadecadienoate(out) = (9Z,12Z)-octadecadienoate(in). It catalyses the reaction a long-chain fatty acid + ATP + CoA = a long-chain fatty acyl-CoA + AMP + diphosphate. The enzyme catalyses (5Z,8Z,11Z,14Z)-eicosatetraenoate + ATP + CoA = (5Z,8Z,11Z,14Z)-eicosatetraenoyl-CoA + AMP + diphosphate. It carries out the reaction a very long-chain fatty acid + ATP + CoA = a very long-chain fatty acyl-CoA + AMP + diphosphate. The catalysed reaction is tetracosanoate + ATP + CoA = tetracosanoyl-CoA + AMP + diphosphate. With respect to regulation, inhibited by Triacsin C. Functionally, mediates the import of long-chain fatty acids (LCFA) into the cell by facilitating their transport at the plasma membrane. Also functions as an acyl-CoA ligase catalyzing the ATP-dependent formation of fatty acyl-CoA using LCFA and very-long-chain fatty acids (VLCFA) as substrates, which prevents fatty acid efflux from cells and might drive more fatty acid uptake. May act directly as a bona fide transporter, or alternatively, in a cytoplasmic or membrane-associated multimeric protein complex to trap and draw fatty acids towards accumulation. Plays a pivotal role in regulating available LCFA substrates from exogenous sources in tissues undergoing high levels of beta-oxidation or triglyceride synthesis. May be involved in regulation of cholesterol metabolism. Probably involved in fatty acid transport across the blood barrier. The protein is Long-chain fatty acid transport protein 1 of Rattus norvegicus (Rat).